A 297-amino-acid polypeptide reads, in one-letter code: 4-hydroxy-tetrahydrodipicolinate synthase (297 aa).

Thr50 contacts pyruvate. The active-site Proton donor/acceptor is the Tyr138. The Schiff-base intermediate with substrate role is filled by Lys166. Position 208 (Ile208) interacts with pyruvate.

The protein belongs to the DapA family. Homotetramer; dimer of dimers.

The protein resides in the cytoplasm. The catalysed reaction is L-aspartate 4-semialdehyde + pyruvate = (2S,4S)-4-hydroxy-2,3,4,5-tetrahydrodipicolinate + H2O + H(+). Its pathway is amino-acid biosynthesis; L-lysine biosynthesis via DAP pathway; (S)-tetrahydrodipicolinate from L-aspartate: step 3/4. In terms of biological role, catalyzes the condensation of (S)-aspartate-beta-semialdehyde [(S)-ASA] and pyruvate to 4-hydroxy-tetrahydrodipicolinate (HTPA). In Gluconobacter oxydans (strain 621H) (Gluconobacter suboxydans), this protein is 4-hydroxy-tetrahydrodipicolinate synthase.